Consider the following 86-residue polypeptide: MSIDTQSIIENNKRSAHDTGSPEVQVALLTARIELLTKHFKIHKKDHHSRRGLLQMVNRRRSLLDYLNKKDNERYKLLIEKLGLRR.

Residues 1 to 10 (MSIDTQSIIE) show a composition bias toward polar residues. The disordered stretch occupies residues 1–21 (MSIDTQSIIENNKRSAHDTGS).

The protein belongs to the universal ribosomal protein uS15 family. Part of the 30S ribosomal subunit. Forms a bridge to the 50S subunit in the 70S ribosome, contacting the 23S rRNA.

Its function is as follows. One of the primary rRNA binding proteins, it binds directly to 16S rRNA where it helps nucleate assembly of the platform of the 30S subunit by binding and bridging several RNA helices of the 16S rRNA. In terms of biological role, forms an intersubunit bridge (bridge B4) with the 23S rRNA of the 50S subunit in the ribosome. This chain is Small ribosomal subunit protein uS15, found in Xylella fastidiosa (strain 9a5c).